Reading from the N-terminus, the 552-residue chain is Urocanate hydratase (552 aa).

NAD(+)-binding positions include 49–50, Gln-127, 173–175, Asp-193, 239–240, 260–264, 270–271, and Tyr-319; these read GG, GMG, NA, QTSAH, and YI. Residue Cys-407 is part of the active site. Gly-489 contributes to the NAD(+) binding site.

The protein belongs to the urocanase family. The cofactor is NAD(+).

Its subcellular location is the cytoplasm. It catalyses the reaction 4-imidazolone-5-propanoate = trans-urocanate + H2O. The protein operates within amino-acid degradation; L-histidine degradation into L-glutamate; N-formimidoyl-L-glutamate from L-histidine: step 2/3. Functionally, catalyzes the conversion of urocanate to 4-imidazolone-5-propionate. This Bacillus mycoides (strain KBAB4) (Bacillus weihenstephanensis) protein is Urocanate hydratase.